The following is a 366-amino-acid chain: Ribosomal RNA large subunit methyltransferase M (366 aa).

Residues S188, 221–224 (CPGG), D240, D260, and D277 each bind S-adenosyl-L-methionine. Catalysis depends on K306, which acts as the Proton acceptor.

The protein belongs to the class I-like SAM-binding methyltransferase superfamily. RNA methyltransferase RlmE family. RlmM subfamily. Monomer.

The protein localises to the cytoplasm. The catalysed reaction is cytidine(2498) in 23S rRNA + S-adenosyl-L-methionine = 2'-O-methylcytidine(2498) in 23S rRNA + S-adenosyl-L-homocysteine + H(+). Functionally, catalyzes the 2'-O-methylation at nucleotide C2498 in 23S rRNA. The sequence is that of Ribosomal RNA large subunit methyltransferase M from Shigella sonnei (strain Ss046).